The following is a 325-amino-acid chain: MTTIILEVDNHTVTTRFILLGFPTRPAFQLLFFSIFLATYLLTLLENLLIILAIHSDGQLHKPMYFFLSHLSFLEMWYVTVISPKMLVDFLSHDKSISFNGCMTQLYFFVTFVCTEYILLAIMAFDRYVAICNPLRYPVIMTNQLCGTLAGGCWFCGLMTAMIKMVFIAQLHYCGMPQINHYFCDISPLLNVSCEDASQAEMVDFFLALMVIAIPLCVVVASYAAILATILRIPSAQGRQKAFSTCASHLTVVILFYSMTLFTYARPKLMYAYNSNKVVSVLYTVIVPLLNPIIYCLRNHEVKAALRKTIHCRGSGPQGNGAFSS.

Topologically, residues 1–30 are extracellular; that stretch reads MTTIILEVDNHTVTTRFILLGFPTRPAFQL. An N-linked (GlcNAc...) asparagine glycan is attached at Asn-10. Residues 31–51 form a helical membrane-spanning segment; sequence LFFSIFLATYLLTLLENLLII. Topologically, residues 52–59 are cytoplasmic; that stretch reads LAIHSDGQ. Residues 60–80 traverse the membrane as a helical segment; sequence LHKPMYFFLSHLSFLEMWYVT. Topologically, residues 81 to 104 are extracellular; it reads VISPKMLVDFLSHDKSISFNGCMT. Cysteines 102 and 194 form a disulfide. A helical transmembrane segment spans residues 105-125; sequence QLYFFVTFVCTEYILLAIMAF. The Cytoplasmic portion of the chain corresponds to 126-144; sequence DRYVAICNPLRYPVIMTNQ. A helical membrane pass occupies residues 145-165; it reads LCGTLAGGCWFCGLMTAMIKM. Residues 166–202 are Extracellular-facing; sequence VFIAQLHYCGMPQINHYFCDISPLLNVSCEDASQAEM. The N-linked (GlcNAc...) asparagine glycan is linked to Asn-191. The helical transmembrane segment at 203–222 threads the bilayer; the sequence is VDFFLALMVIAIPLCVVVAS. Topologically, residues 223–242 are cytoplasmic; it reads YAAILATILRIPSAQGRQKA. The helical transmembrane segment at 243–263 threads the bilayer; sequence FSTCASHLTVVILFYSMTLFT. Residues 264–276 are Extracellular-facing; the sequence is YARPKLMYAYNSN. A helical transmembrane segment spans residues 277–297; sequence KVVSVLYTVIVPLLNPIIYCL. Residues 298-325 lie on the Cytoplasmic side of the membrane; it reads RNHEVKAALRKTIHCRGSGPQGNGAFSS.

It belongs to the G-protein coupled receptor 1 family.

It is found in the cell membrane. Its function is as follows. Odorant receptor. The chain is Olfactory receptor 6Y1 (OR6Y1) from Homo sapiens (Human).